The following is a 156-amino-acid chain: MSRRRTAKKRIVMPDPVYKNSLLELIVRQVMRNGKKLLAYRIMYNSMIKIAEMTQKDPLDVLEKAIRNVTPLIEVKARRVGGSTYQVPLEVLPERGTTLAIRWILAACRKNRGKPMYIKLTNELIDASNKSGSAIKKKDEIHRMAEANKAFAKQRF.

Belongs to the universal ribosomal protein uS7 family. In terms of assembly, part of the 30S ribosomal subunit.

Its subcellular location is the plastid. One of the primary rRNA binding proteins, it binds directly to 16S rRNA where it nucleates assembly of the head domain of the 30S subunit. This chain is Small ribosomal subunit protein uS7c (rps7), found in Prototheca wickerhamii.